We begin with the raw amino-acid sequence, 3579 residues long: Protocadherin-like wing polarity protein stan (3579 aa).

Residues 1–29 (MQTREFPQRPLGLLLVLLVVLLQSSLIKS) form the signal peptide. At 30–2816 (YLIIVHEDTP…EPSLLVQITS (2787 aa)) the chain is on the extracellular side. N-linked (GlcNAc...) asparagine glycosylation is found at Asn-46, Asn-179, and Asn-340. 8 consecutive Cadherin domains span residues 360–464 (EQAL…SPTF), 465–581 (EAEQ…YPQF), 582–689 (SERT…APRF), 690–794 (YTSQ…DPAF), 795–897 (NPKY…APIF), 898–1007 (ENAP…APAF), 1008–1113 (KSPL…PPTF), and 1114–1220 (ASDK…APVL). N-linked (GlcNAc...) asparagine glycosylation occurs at Asn-671. An N-linked (GlcNAc...) asparagine glycan is attached at Asn-886. Residues Asn-1269, Asn-1374, and Asn-1441 are each glycosylated (N-linked (GlcNAc...) asparagine). The region spanning 1482–1518 (EVDLCYSDPCQNGGTCVRREGGYTCVCPSTHTGQNCE) is the EGF-like 1; calcium-binding domain. Cystine bridges form between Cys-1486-Cys-1497, Cys-1491-Cys-1506, and Cys-1508-Cys-1517. The Laminin G-like 1 domain maps to 1556–1753 (LRARAFGRNS…VADNGTLAGC (198 aa)). N-linked (GlcNAc...) asparagine glycans are attached at residues Asn-1650, Asn-1678, and Asn-1747. Intrachain disulfides connect Cys-1727/Cys-1753, Cys-1760/Cys-1771, Cys-1765/Cys-1780, and Cys-1782/Cys-1791. An EGF-like 2; calcium-binding domain is found at 1756–1792 (KAPLCQSEPCFNGGTCREGWGTYSCECPEGYAGNSCQ). Residues 1796-1963 (PAPWRFSGDG…TIRENVEDGC (168 aa)) enclose the Laminin G-like 2 domain. N-linked (GlcNAc...) asparagine glycosylation is present at Asn-1843. 4 disulfides stabilise this stretch: Cys-1937–Cys-1963, Cys-1969–Cys-1979, Cys-1973–Cys-1988, and Cys-1990–Cys-1999. One can recognise an EGF-like 3; calcium-binding domain in the interval 1965–2000 (SRAQCPDHCPNHSSCQSSWDLSTCECDSGYVGTDCA). Asn-1975 carries N-linked (GlcNAc...) asparagine glycosylation. Residues Asn-2016, Asn-2028, Asn-2071, and Asn-2088 are each glycosylated (N-linked (GlcNAc...) asparagine). Intrachain disulfides connect Cys-2092-Cys-2095, Cys-2097-Cys-2114, Cys-2116-Cys-2125, and Cys-2128-Cys-2140. A Laminin EGF-like domain is found at 2095–2142 (CDCYSIGSFSGACNPLTGQCECREGVIGRRCDSCSNPYAEVTLSGCEV). Residues Asn-2196 and Asn-2320 are each glycosylated (N-linked (GlcNAc...) asparagine). Over residues 2553-2562 (QETQRLEIPS) the composition is skewed to basic and acidic residues. Disordered stretches follow at residues 2553-2582 (QETQ…STEQ), 2610-2635 (HEIP…EREP), and 2654-2684 (VISP…GENE). A compositionally biased stretch (low complexity) spans 2567–2579 (SSSSPSSSSSSGS). A GAIN-B domain is found at 2653-2803 (EVISPDSPEM…AVIVDVIDPE (151 aa)). Disulfide bonds link Cys-2747-Cys-2785 and Cys-2762-Cys-2787. Residues 2747-2803 (CVRWNSFTNQWTRLGCQTEIPDFDGDFNPAAQQAILVNCSCTHISSYAVIVDVIDPE) are GPS. Asn-2784 carries an N-linked (GlcNAc...) asparagine glycan. The helical transmembrane segment at 2817–2837 (YSAFLVSLPLLLGVLLALALL) threads the bilayer. Residues 2838–2845 (RGQQTNSN) lie on the Cytoplasmic side of the membrane. The helical transmembrane segment at 2846-2866 (TIHQNIVLCVFCAELLFFVGM) threads the bilayer. Residues 2867–2883 (QSRRQLLESEFPCKLTA) are Extracellular-facing. Residues 2884-2904 (ICLHYFWLAAFAWTTVDCVHL) traverse the membrane as a helical segment. At 2905 to 2919 (YRMLTEMRDINHGPM) the chain is on the cytoplasmic side. A helical membrane pass occupies residues 2920-2940 (GFYFAMGYGAPAIVVGLSVGV). Topologically, residues 2941-2959 (RAHEYGNSLFCWLSVYEPV) are extracellular. A helical membrane pass occupies residues 2960–2980 (VWWLVGPIAGMSVVNLLILFV). The Cytoplasmic segment spans residues 2981–3000 (SVKAAFTLKDHVLGFGNLRT). The helical transmembrane segment at 3001-3021 (LLWLSVVSLPLMGVMWVLAVL) threads the bilayer. At 3022–3031 (AASEHSQLLS) the chain is on the extracellular side. The helical transmembrane segment at 3032–3052 (LLLSGVVLLHALFCLIGYCII) threads the bilayer. The Cytoplasmic portion of the chain corresponds to 3053 to 3579 (NKRVRENLQR…RNIDDDETTV (527 aa)). Disordered regions lie at residues 3111 to 3225 (GISA…TPAY), 3343 to 3377 (LYGR…SGSQ), 3458 to 3486 (YHQQ…YHFP), and 3499 to 3579 (LSHT…ETTV). Residues 3113 to 3128 (SASSTTSRSTAKTSSS) show a composition bias toward low complexity. A compositionally biased stretch (basic and acidic residues) spans 3167 to 3191 (RGGEEKPSRRQRKDSDSGSETDGRS). Ser-3199 and Ser-3200 each carry phosphoserine. Positions 3208 to 3223 (ARSSGTHRSTAVSSTP) are enriched in polar residues. Over residues 3343 to 3352 (LYGRRGEYPD) the composition is skewed to basic and acidic residues. A compositionally biased stretch (low complexity) spans 3459–3468 (HQQQQQQQQH). A compositionally biased stretch (basic and acidic residues) spans 3469 to 3482 (HLQDRLSEGSDKNG). Over residues 3501 to 3513 (HTQPPSLHGSQLM) the composition is skewed to polar residues.

Belongs to the G-protein coupled receptor 2 family. In terms of assembly, interacts with ATP6AP2 (via N-terminus). In the pupal wing, expressed at relatively even levels in all regions. Abundant in 6-9 hours embryos. Expressed at higher levels in pupae than larvae.

It is found in the cell membrane. The protein resides in the apical cell membrane. Its function is as follows. Involved in the fz signaling pathway that controls wing tissue polarity. Also mediates homophilic cell adhesion. May play a role in initiating prehair morphogenesis. May play a critical role in tissue polarity and in formation of normal dendrite fields. During planar cell polarity, stabilizes asymmetric PCP domains together with ATP6AP2. This Drosophila melanogaster (Fruit fly) protein is Protocadherin-like wing polarity protein stan (stan).